The sequence spans 943 residues: Receptor-like protein 35 (943 aa).

The first 31 residues, 1–31, serve as a signal peptide directing secretion; sequence MTGSWNPTSIIIPVTLSFLLSFIHNFADVVA. At 32–897 the chain is on the extracellular side; sequence APTRHLCLPE…EEEDEEEISW (866 aa). Asparagine 67, asparagine 82, asparagine 118, asparagine 147, asparagine 171, asparagine 195, asparagine 219, and asparagine 222 each carry an N-linked (GlcNAc...) asparagine glycan. LRR repeat units follow at residues 124–148, 150–171, 172–196, 198–220, 222–244, 245–267, 268–292, 293–317, 319–340, 341–364, and 366–389; these read LQNL…IGNL, HLTS…SIEN, LSRL…IGNL, HLTS…IGNL, NLTF…IGNL, ARLT…SFGN, LNQL…LLNL, TRLS…SLLS, LMDF…LFNI, PPLI…NISS, and SNLQ…LSRF. Asparagine 291 and asparagine 312 each carry an N-linked (GlcNAc...) asparagine glycan. 2 N-linked (GlcNAc...) asparagine glycosylation sites follow: asparagine 354 and asparagine 361. The LRR 12; degenerate repeat unit spans residues 390–414; sequence VNLTLFDLSHLNTQCRPVDFSIFSH. Asparagine 391 carries an N-linked (GlcNAc...) asparagine glycan. LRR repeat units lie at residues 415-439, 440-463, 467-490, 491-514, 515-537, 544-568, 569-592, 593-617, 619-639, 640-665, 667-685, 686-709, 753-777, 778-801, 802-825, and 827-850; these read LKSL…ILPY, FKTL…SVSS, SQSI…LRTQ, HELG…LWTL, PNLF…SKKH, KPSM…ICGL, RSLN…MEKL, KSTL…IFES, RSLD…LIRF, SNLE…SLSK, QVLV…EATF, PELR…YFVK, LTIY…IGLL, KELL…MGNL, TALE…LGDL, and FLAY…QFRR. N-linked (GlcNAc...) asparagine glycosylation occurs at asparagine 457. N-linked (GlcNAc...) asparagine glycans are attached at residues asparagine 521, asparagine 524, asparagine 556, asparagine 582, and asparagine 605. The N-linked (GlcNAc...) asparagine glycan is linked to asparagine 653. The N-linked (GlcNAc...) asparagine glycan is linked to asparagine 699. Residues asparagine 784 and asparagine 800 are each glycosylated (N-linked (GlcNAc...) asparagine). N-linked (GlcNAc...) asparagine glycosylation is found at asparagine 832, asparagine 852, and asparagine 882. A helical transmembrane segment spans residues 898-918; sequence IAAAIGFIPGIVFGLTIGYIL. Topologically, residues 919–943 are cytoplasmic; sequence VSYKPEWFMNPFGRNNRRRRNTTTH.

This sequence belongs to the RLP family.

It localises to the cell membrane. The chain is Receptor-like protein 35 from Arabidopsis thaliana (Mouse-ear cress).